The following is a 376-amino-acid chain: 26S proteasome non-ATPase regulatory subunit 13 (376 aa).

In terms of domain architecture, PCI spans 171-338; it reads SYYKDALRFL…KRVHMTWVQP (168 aa).

The protein belongs to the proteasome subunit S11 family. As to quaternary structure, component of the 19S proteasome regulatory particle complex. The 26S proteasome consists of a 20S core particle (CP) and two 19S regulatory subunits (RP). The regulatory particle is made of a lid composed of 9 subunits including PSMD13, a base containing 6 ATPases and few additional components.

Component of the 26S proteasome, a multiprotein complex involved in the ATP-dependent degradation of ubiquitinated proteins. This complex plays a key role in the maintenance of protein homeostasis by removing misfolded or damaged proteins, which could impair cellular functions, and by removing proteins whose functions are no longer required. Therefore, the proteasome participates in numerous cellular processes, including cell cycle progression, apoptosis, or DNA damage repair. This Bos taurus (Bovine) protein is 26S proteasome non-ATPase regulatory subunit 13 (PSMD13).